Consider the following 213-residue polypeptide: MSNRKALLGKKLGMSQVWDENGFFVPVTLVDVSTNVVTAVKTEESDGYKAVQLGYGAIDPTKVTKPLAGHFAKAGVTPRRHLVEVRTDDVDQFEAGQELAADLFEEGAEVDVTGTTKGKGFAGTIKRWGFKSYRRTHGSHKNERRPGSVGACATPSRILKGKRMAGRMGHVTATTQNLIIVSADVENGILAIKGAIPGPKGGIVLVRSAVKGA.

The protein belongs to the universal ribosomal protein uL3 family. In terms of assembly, part of the 50S ribosomal subunit. Forms a cluster with proteins L14 and L19.

Its function is as follows. One of the primary rRNA binding proteins, it binds directly near the 3'-end of the 23S rRNA, where it nucleates assembly of the 50S subunit. The chain is Large ribosomal subunit protein uL3 from Bifidobacterium longum subsp. infantis (strain ATCC 15697 / DSM 20088 / JCM 1222 / NCTC 11817 / S12).